Reading from the N-terminus, the 324-residue chain is Phospho-N-acetylmuramoyl-pentapeptide-transferase (324 aa).

10 helical membrane-spanning segments follow: residues 9 to 29, 54 to 74, 77 to 97, 117 to 137, 147 to 167, 176 to 196, 201 to 221, 227 to 247, 253 to 273, and 304 to 324; these read TFAV…PFLV, MGAV…SFIG, VSAA…LGFL, FLGQ…SDFA, IEVD…VGFS, LDGL…VIAF, MDVA…LLFN, IFMG…VSIL, LLLL…LQVF, and VLTF…VVIF.

The protein belongs to the glycosyltransferase 4 family. MraY subfamily. It depends on Mg(2+) as a cofactor.

It localises to the cell membrane. The enzyme catalyses UDP-N-acetyl-alpha-D-muramoyl-L-alanyl-gamma-D-glutamyl-meso-2,6-diaminopimeloyl-D-alanyl-D-alanine + di-trans,octa-cis-undecaprenyl phosphate = di-trans,octa-cis-undecaprenyl diphospho-N-acetyl-alpha-D-muramoyl-L-alanyl-D-glutamyl-meso-2,6-diaminopimeloyl-D-alanyl-D-alanine + UMP. The protein operates within cell wall biogenesis; peptidoglycan biosynthesis. Functionally, catalyzes the initial step of the lipid cycle reactions in the biosynthesis of the cell wall peptidoglycan: transfers peptidoglycan precursor phospho-MurNAc-pentapeptide from UDP-MurNAc-pentapeptide onto the lipid carrier undecaprenyl phosphate, yielding undecaprenyl-pyrophosphoryl-MurNAc-pentapeptide, known as lipid I. The chain is Phospho-N-acetylmuramoyl-pentapeptide-transferase from Listeria welshimeri serovar 6b (strain ATCC 35897 / DSM 20650 / CCUG 15529 / CIP 8149 / NCTC 11857 / SLCC 5334 / V8).